Consider the following 65-residue polypeptide: Conotoxin VnMLCL-031 (65 aa).

Positions 1-19 (MLCLPXFIILLLLASPAAP) are cleaved as a signal peptide. The propeptide occupies 20–43 (NPLQTRXQSNLIRAGPEDANIKTX). An Isoleucine amide modification is found at Ile-64.

This sequence belongs to the conotoxin T superfamily. In terms of tissue distribution, expressed by the venom duct.

It is found in the secreted. The protein is Conotoxin VnMLCL-031 of Conus ventricosus (Mediterranean cone).